Reading from the N-terminus, the 362-residue chain is Aminomethyltransferase (362 aa).

It belongs to the GcvT family. In terms of assembly, the glycine cleavage system is composed of four proteins: P, T, L and H.

The catalysed reaction is N(6)-[(R)-S(8)-aminomethyldihydrolipoyl]-L-lysyl-[protein] + (6S)-5,6,7,8-tetrahydrofolate = N(6)-[(R)-dihydrolipoyl]-L-lysyl-[protein] + (6R)-5,10-methylene-5,6,7,8-tetrahydrofolate + NH4(+). Its function is as follows. The glycine cleavage system catalyzes the degradation of glycine. This is Aminomethyltransferase from Bacillus subtilis (strain 168).